A 116-amino-acid chain; its full sequence is Somatostatin (116 aa).

An N-terminal signal peptide occupies residues Met-1–Gly-24. A propeptide spanning residues Ala-25–Arg-88 is cleaved from the precursor. An Alanine amide modification is found at Ala-43. A disordered region spans residues Gln-62–Met-82. Cys-105 and Cys-116 form a disulfide bridge.

The protein belongs to the somatostatin family. Post-translationally, C-terminal amidation of the neuronostatin peptide is required for its biological activity, including for the regulation of mean arterial pressure.

It localises to the secreted. Inhibits the secretion of pituitary hormones, including that of growth hormone/somatotropin (GH1), PRL, ACTH, luteinizing hormone (LH) and TSH. Also impairs ghrelin- and GnRH-stimulated secretion of GH1 and LH; the inhibition of ghrelin-stimulated secretion of GH1 can be further increased by neuronostatin. Its function is as follows. May enhance low-glucose-induced glucagon release by pancreatic alpha cells. This effect may be mediated by binding to GPR107 and PKA activation. May regulate cardiac contractile function. May compromise cardiomyocyte viability. In the central nervous system, may impair memory retention and may affect hippocampal excitability. May also have anxiolytic and anorexigenic effects. May play a role in arterial pressure regulation. May inhibit basal, but not ghrelin- or GnRH-stimulated secretion of GH1 or LH, but does not affect the release of other pituitary hormones, including PRL, ACTH, FSH or TSH. Potentiates inhibitory action of somatostatin on ghrelin-stimulated secretion of GH1, but not that on GnRH-stimulated secretion of LH. This chain is Somatostatin (SST), found in Homo sapiens (Human).